A 118-amino-acid chain; its full sequence is Large ribosomal subunit protein uL24 (118 aa).

The protein belongs to the universal ribosomal protein uL24 family. As to quaternary structure, part of the 50S ribosomal subunit.

Its function is as follows. One of two assembly initiator proteins, it binds directly to the 5'-end of the 23S rRNA, where it nucleates assembly of the 50S subunit. One of the proteins that surrounds the polypeptide exit tunnel on the outside of the subunit. The sequence is that of Large ribosomal subunit protein uL24 from Synechococcus sp. (strain CC9605).